Reading from the N-terminus, the 414-residue chain is Serine/threonine transporter SstT (414 aa).

At 2-15 (TTQHSPGLFRRLAH) the chain is on the cytoplasmic side. A helical membrane pass occupies residues 16–36 (GSLVKQILAGLILGILLAWIS). Over 37–45 (KPAAEAVGL) the chain is Periplasmic. The helical transmembrane segment at 46–66 (LGTLFVGALKAVAPILVLMLV) threads the bilayer. Topologically, residues 67 to 83 (MASIANHQHGQKTNIRP) are cytoplasmic. The chain crosses the membrane as a helical span at residues 84 to 104 (ILFLYLLGTFSAALAAVIFSF). At 105–142 (AFPSTLHLSSSAGDISPPSGIVEVMRGLVMSMVSNPID) the chain is on the periplasmic side. A helical membrane pass occupies residues 143-163 (ALLKGNYIGILVWAIGLGFAL). Topologically, residues 164–179 (RHGNETTKNLVNDMSN) are cytoplasmic. Residues 180 to 200 (AVTFMVKLVIHFAPIGIFGLV) form a helical membrane-spanning segment. The Periplasmic segment spans residues 201-217 (SSTLATTGFSTLWGYAQ). The chain crosses the membrane as a helical span at residues 218–238 (LLVVLVGCMLLVALVVNPLLV). The Cytoplasmic segment spans residues 239–299 (WWKIRRNPFP…VSIPLGATIN (61 aa)). A helical transmembrane segment spans residues 300–320 (MAGAAITITVLTLAAVNTLGI). Over 321–331 (PVDLPTALLLS) the chain is Periplasmic. Residues 332–352 (VVASLCACGASGVAGGSLLLI) traverse the membrane as a helical segment. At 353-414 (PLACNMFGIS…DRLANSALRN (62 aa)) the chain is on the cytoplasmic side.

This sequence belongs to the dicarboxylate/amino acid:cation symporter (DAACS) (TC 2.A.23) family.

Its subcellular location is the cell inner membrane. It carries out the reaction L-serine(in) + Na(+)(in) = L-serine(out) + Na(+)(out). The catalysed reaction is L-threonine(in) + Na(+)(in) = L-threonine(out) + Na(+)(out). Involved in the import of serine and threonine into the cell, with the concomitant import of sodium (symport system). This chain is Serine/threonine transporter SstT, found in Escherichia coli (strain UTI89 / UPEC).